The primary structure comprises 145 residues: Superoxide dismutase [Mn/Fe] (145 aa).

Fe(3+) contacts are provided by His-10 and His-64. Mn(2+) contacts are provided by His-10 and His-64.

Belongs to the iron/manganese superoxide dismutase family. Mn(2+) serves as cofactor. Fe(3+) is required as a cofactor.

It catalyses the reaction 2 superoxide + 2 H(+) = H2O2 + O2. Functionally, destroys superoxide anion radicals which are normally produced within the cells and which are toxic to biological systems. Catalyzes the dismutation of superoxide anion radicals into O2 and H2O2 by successive reduction and oxidation of the transition metal ion at the active site. The sequence is that of Superoxide dismutase [Mn/Fe] (sodA) from Streptococcus alactolyticus.